The primary structure comprises 544 residues: Intercellular adhesion molecule 3 (544 aa).

Positions 1–31 are cleaved as a signal peptide; it reads MIASGPPPRVYWTSLIFLLLACCLLPTGAQG. At 32–486 the chain is on the extracellular side; sequence QTYQVRVEPK…MMDVQGRNPV (455 aa). Residues 48–105 enclose the Ig-like C2-type 1 domain; the sequence is GEPLVVNCTLDCPGPGLISLETALSKEPHSRGLGWAAFRLTNVTGDMEILCSGICNKS. Residues Asn-54, Asn-89, Asn-103, Asn-112, Asn-138, Asn-190, Asn-209, Asn-243, Asn-267, Asn-296, Asn-321, and Asn-326 are each glycosylated (N-linked (GlcNAc...) asparagine). Cystine bridges form between Cys-55–Cys-98 and Cys-59–Cys-102. Residues 134-200 enclose the Ig-like C2-type 2 domain; it reads GEELNLSCLV…FSCRSELDLR (67 aa). Cys-141 and Cys-193 are disulfide-bonded. The Ig-like C2-type 3 domain occupies 237 to 302; it reads ETSWPVNCSL…IVCNVTLGVE (66 aa). An intrachain disulfide couples Cys-244 to Cys-295. The Ig-like C2-type 4 domain maps to 330–383; sequence GTPVTVTCAAGPQVQVMLDGVPAAVPGQPAQLQLKATEMDDRRTFFCNATLKVH. Cys-337 and Cys-376 are disulfide-bonded. 3 N-linked (GlcNAc...) asparagine glycosylation sites follow: Asn-377, Asn-390, and Asn-456. The Ig-like C2-type 5 domain occupies 417-470; it reads KTMHILQCQARGNPNPQLQCLREGSKFKVPVGIPFLVLLNYSGTYSCQAASSRG. An intrachain disulfide couples Cys-424 to Cys-463. The helical transmembrane segment at 487-511 threads the bilayer; that stretch reads TINIVLGVLAILGLVTLAAASVYVF. Over 512 to 544 the chain is Cytoplasmic; sequence WVQRQHDIYHLTPRSTRWRLTSTQPVTVAEELS.

Belongs to the immunoglobulin superfamily. ICAM family. As to quaternary structure, interacts with moesin/MSN. As to expression, leukocytes.

The protein resides in the membrane. ICAM proteins are ligands for the leukocyte adhesion protein LFA-1 (integrin alpha-L/beta-2). ICAM3 is also a ligand for integrin alpha-D/beta-2. In association with integrin alpha-L/beta-2, contributes to apoptotic neutrophil phagocytosis by macrophages. This Bos taurus (Bovine) protein is Intercellular adhesion molecule 3 (ICAM3).